Here is a 309-residue protein sequence, read N- to C-terminus: Small ribosomal subunit biogenesis GTPase RsgA (309 aa).

The CP-type G domain occupies 88–247; that stretch reads KNLITRPPVA…IADTPGFNKP (160 aa). GTP is bound by residues 137-140 and 189-197; these read TKRD and GPSGVGKSS. Zn(2+)-binding residues include C272, C277, H279, and C285.

Belongs to the TRAFAC class YlqF/YawG GTPase family. RsgA subfamily. As to quaternary structure, monomer. Associates with 30S ribosomal subunit, binds 16S rRNA. Zn(2+) serves as cofactor.

It is found in the cytoplasm. One of several proteins that assist in the late maturation steps of the functional core of the 30S ribosomal subunit. Helps release RbfA from mature subunits. May play a role in the assembly of ribosomal proteins into the subunit. Circularly permuted GTPase that catalyzes slow GTP hydrolysis, GTPase activity is stimulated by the 30S ribosomal subunit. The polypeptide is Small ribosomal subunit biogenesis GTPase RsgA (Prochlorococcus marinus (strain SARG / CCMP1375 / SS120)).